We begin with the raw amino-acid sequence, 257 residues long: Glycerol-3-phosphate acyltransferase (257 aa).

Transmembrane regions (helical) follow at residues 7–27 (IVMA…LIGS), 66–86 (ILTL…TYII), 104–124 (AILV…PIFF), 140–160 (ITVD…ILLI), 164–184 (MSLS…VPGI), and 203–223 (YVIK…SLLI).

It belongs to the PlsY family. Probably interacts with PlsX.

The protein resides in the cell membrane. The catalysed reaction is an acyl phosphate + sn-glycerol 3-phosphate = a 1-acyl-sn-glycero-3-phosphate + phosphate. It functions in the pathway lipid metabolism; phospholipid metabolism. In terms of biological role, catalyzes the transfer of an acyl group from acyl-phosphate (acyl-PO(4)) to glycerol-3-phosphate (G3P) to form lysophosphatidic acid (LPA). This enzyme utilizes acyl-phosphate as fatty acyl donor, but not acyl-CoA or acyl-ACP. In Ureaplasma parvum serovar 3 (strain ATCC 700970), this protein is Glycerol-3-phosphate acyltransferase.